Consider the following 142-residue polypeptide: Cystatin-8 (142 aa).

Residues 1 to 21 (MPRCRWLSLILLTIPLALVAR) form the signal peptide. 2 N-linked (GlcNAc...) asparagine glycosylation sites follow: Asn-27 and Asn-39. The Secondary area of contact motif lies at 77–81 (QVTNL). 2 disulfide bridges follow: Cys-95–Cys-105 and Cys-119–Cys-139.

This sequence belongs to the cystatin family. In terms of tissue distribution, proximal caput region of the epididymis. Lower expression in the testis. Within the testis it is localized to the elongating spermatids, whereas within the epididymis it is exclusively synthesized by the proximal caput epithelium.

The protein localises to the secreted. Performs a specialized role during sperm development and maturation. The sequence is that of Cystatin-8 (CST8) from Homo sapiens (Human).